Here is a 142-residue protein sequence, read N- to C-terminus: Aspartate 1-decarboxylase (142 aa).

Ser25 functions as the Schiff-base intermediate with substrate; via pyruvic acid in the catalytic mechanism. Pyruvic acid (Ser) is present on Ser25. Thr57 serves as a coordination point for substrate. Tyr58 (proton donor) is an active-site residue. 73-75 (GAA) lines the substrate pocket.

It belongs to the PanD family. Heterooctamer of four alpha and four beta subunits. Pyruvate is required as a cofactor. In terms of processing, is synthesized initially as an inactive proenzyme, which is activated by self-cleavage at a specific serine bond to produce a beta-subunit with a hydroxyl group at its C-terminus and an alpha-subunit with a pyruvoyl group at its N-terminus.

It localises to the cytoplasm. The catalysed reaction is L-aspartate + H(+) = beta-alanine + CO2. The protein operates within cofactor biosynthesis; (R)-pantothenate biosynthesis; beta-alanine from L-aspartate: step 1/1. Its function is as follows. Catalyzes the pyruvoyl-dependent decarboxylation of aspartate to produce beta-alanine. This Arthrobacter sp. (strain FB24) protein is Aspartate 1-decarboxylase.